The following is a 142-amino-acid chain: Organic hydroperoxide resistance protein-like 2 (142 aa).

It belongs to the OsmC/Ohr family.

The sequence is that of Organic hydroperoxide resistance protein-like 2 from Staphylococcus epidermidis (strain ATCC 35984 / DSM 28319 / BCRC 17069 / CCUG 31568 / BM 3577 / RP62A).